The chain runs to 603 residues: Coiled-coil domain-containing protein 148 (603 aa).

Coiled coils occupy residues 365-429 (LAKD…KKKK) and 461-510 (EQSL…KQVA).

This is Coiled-coil domain-containing protein 148 (CCDC148) from Macaca fascicularis (Crab-eating macaque).